The sequence spans 323 residues: D-alanine--D-alanine ligase (323 aa).

Residues 102–300 enclose the ATP-grasp domain; sequence KQIFRAEGIP…FTELVERMLQ (199 aa). Residue 130-185 coordinates ATP; it reads VARLGSPLVVKPSNSGSTVGISLARDEVSLAQGLALASSVSSRVFLERYIPGKEIT. Mg(2+) is bound by residues Asp254, Glu267, and Asn269.

It belongs to the D-alanine--D-alanine ligase family. Mg(2+) serves as cofactor. Mn(2+) is required as a cofactor.

It localises to the cytoplasm. It carries out the reaction 2 D-alanine + ATP = D-alanyl-D-alanine + ADP + phosphate + H(+). It participates in cell wall biogenesis; peptidoglycan biosynthesis. Functionally, cell wall formation. In Synechococcus sp. (strain JA-3-3Ab) (Cyanobacteria bacterium Yellowstone A-Prime), this protein is D-alanine--D-alanine ligase.